The chain runs to 356 residues: Vesicular integral-membrane protein VIP36 (356 aa).

The signal sequence occupies residues 1–44 (MAAEGWIWRWGWGRRCLGRPGLPGPGPGPATPLFLLLLLGPVVA). Over 45–322 (DITDGNSEHL…FRSGPLTGWR (278 aa)) the chain is Lumenal. The L-type lectin-like domain occupies 52 to 276 (EHLKREHSLI…DIISMKLFQL (225 aa)). A carbohydrate-binding residues include Ser-96 and Asp-131. 3 residues coordinate Ca(2+): Asp-162, Tyr-164, and Asn-166. 164-166 (YPN) is an a carbohydrate binding site. Asn-183 carries N-linked (GlcNAc...) asparagine glycosylation. Position 190 (His-190) interacts with a carbohydrate. Asp-193 is a Ca(2+) binding site. A disulfide bridge connects residues Cys-202 and Cys-239. Residue 260–262 (GDL) participates in a carbohydrate binding. The chain crosses the membrane as a helical span at residues 323-345 (VFLLLLCALLGIIVCAVVGAVVF). Topologically, residues 346 to 356 (QKRQERNKRFY) are cytoplasmic.

In terms of assembly, monomer. It depends on Ca(2+) as a cofactor. In terms of tissue distribution, expressed in kidney, liver, intestine, lung, spleen and heart. Low expression in brain.

Its subcellular location is the golgi apparatus membrane. In terms of biological role, plays a role as an intracellular lectin in the early secretory pathway. Interacts with N-acetyl-D-galactosamine and high-mannose type glycans and may also bind to O-linked glycans. Involved in the transport and sorting of glycoproteins carrying high mannose-type glycans. This Canis lupus familiaris (Dog) protein is Vesicular integral-membrane protein VIP36 (LMAN2).